The chain runs to 310 residues: tRNA-cytidine(32) 2-sulfurtransferase (310 aa).

The PP-loop motif motif lies at 47 to 52 (SGGKDS). 3 residues coordinate [4Fe-4S] cluster: C122, C125, and C213.

It belongs to the TtcA family. In terms of assembly, homodimer. The cofactor is Mg(2+). It depends on [4Fe-4S] cluster as a cofactor.

Its subcellular location is the cytoplasm. It catalyses the reaction cytidine(32) in tRNA + S-sulfanyl-L-cysteinyl-[cysteine desulfurase] + AH2 + ATP = 2-thiocytidine(32) in tRNA + L-cysteinyl-[cysteine desulfurase] + A + AMP + diphosphate + H(+). It participates in tRNA modification. Catalyzes the ATP-dependent 2-thiolation of cytidine in position 32 of tRNA, to form 2-thiocytidine (s(2)C32). The sulfur atoms are provided by the cysteine/cysteine desulfurase (IscS) system. The chain is tRNA-cytidine(32) 2-sulfurtransferase from Serratia proteamaculans (strain 568).